The primary structure comprises 223 residues: 7-cyano-7-deazaguanine synthase (223 aa).

Residue 15–25 (FSGGQDSTTCL) participates in ATP binding. Cys-191, Cys-200, Cys-203, and Cys-206 together coordinate Zn(2+).

The protein belongs to the QueC family. In terms of assembly, homodimer. Zn(2+) serves as cofactor.

It carries out the reaction 7-carboxy-7-deazaguanine + NH4(+) + ATP = 7-cyano-7-deazaguanine + ADP + phosphate + H2O + H(+). It participates in purine metabolism; 7-cyano-7-deazaguanine biosynthesis. Functionally, catalyzes the ATP-dependent conversion of 7-carboxy-7-deazaguanine (CDG) to 7-cyano-7-deazaguanine (preQ(0)). This is 7-cyano-7-deazaguanine synthase from Staphylococcus epidermidis (strain ATCC 35984 / DSM 28319 / BCRC 17069 / CCUG 31568 / BM 3577 / RP62A).